The following is a 173-amino-acid chain: NAD(P)H-quinone oxidoreductase subunit J (173 aa).

This sequence belongs to the complex I 30 kDa subunit family. NDH-1 can be composed of about 15 different subunits; different subcomplexes with different compositions have been identified which probably have different functions.

It is found in the cellular thylakoid membrane. The enzyme catalyses a plastoquinone + NADH + (n+1) H(+)(in) = a plastoquinol + NAD(+) + n H(+)(out). It catalyses the reaction a plastoquinone + NADPH + (n+1) H(+)(in) = a plastoquinol + NADP(+) + n H(+)(out). In terms of biological role, NDH-1 shuttles electrons from an unknown electron donor, via FMN and iron-sulfur (Fe-S) centers, to quinones in the respiratory and/or the photosynthetic chain. The immediate electron acceptor for the enzyme in this species is believed to be plastoquinone. Couples the redox reaction to proton translocation, and thus conserves the redox energy in a proton gradient. Cyanobacterial NDH-1 also plays a role in inorganic carbon-concentration. The sequence is that of NAD(P)H-quinone oxidoreductase subunit J from Prochlorococcus marinus (strain NATL1A).